A 448-amino-acid chain; its full sequence is Tubulin beta chain (448 aa).

GTP contacts are provided by glutamine 11, glutamate 69, serine 138, glycine 142, threonine 143, glycine 144, asparagine 204, and asparagine 226. Position 69 (glutamate 69) interacts with Mg(2+). The tract at residues 426–448 (QDAGIDEEEEEYEEEAPVDEPLE) is disordered. The span at 429–448 (GIDEEEEEYEEEAPVDEPLE) shows a compositional bias: acidic residues.

It belongs to the tubulin family. As to quaternary structure, dimer of alpha and beta chains. A typical microtubule is a hollow water-filled tube with an outer diameter of 25 nm and an inner diameter of 15 nM. Alpha-beta heterodimers associate head-to-tail to form protofilaments running lengthwise along the microtubule wall with the beta-tubulin subunit facing the microtubule plus end conferring a structural polarity. Microtubules usually have 13 protofilaments but different protofilament numbers can be found in some organisms and specialized cells. Mg(2+) serves as cofactor.

It is found in the cytoplasm. The protein localises to the cytoskeleton. Tubulin is the major constituent of microtubules, a cylinder consisting of laterally associated linear protofilaments composed of alpha- and beta-tubulin heterodimers. Microtubules grow by the addition of GTP-tubulin dimers to the microtubule end, where a stabilizing cap forms. Below the cap, tubulin dimers are in GDP-bound state, owing to GTPase activity of alpha-tubulin. This chain is Tubulin beta chain (TUB2), found in Epichloe coenophiala (Tall fescue endophyte fungus).